The following is a 1498-amino-acid chain: DNA-directed RNA polymerase subunit beta' (1498 aa).

Positions 67, 69, 82, and 85 each coordinate Zn(2+). 3 residues coordinate Mg(2+): Asp499, Asp501, and Asp503. Cys867, Cys943, Cys950, and Cys953 together coordinate Zn(2+).

It belongs to the RNA polymerase beta' chain family. As to quaternary structure, the RNAP catalytic core consists of 2 alpha, 1 beta, 1 beta' and 1 omega subunit. When a sigma factor is associated with the core the holoenzyme is formed, which can initiate transcription. The cofactor is Mg(2+). Zn(2+) is required as a cofactor.

The catalysed reaction is RNA(n) + a ribonucleoside 5'-triphosphate = RNA(n+1) + diphosphate. DNA-dependent RNA polymerase catalyzes the transcription of DNA into RNA using the four ribonucleoside triphosphates as substrates. The protein is DNA-directed RNA polymerase subunit beta' of Chlorobium luteolum (strain DSM 273 / BCRC 81028 / 2530) (Pelodictyon luteolum).